A 246-amino-acid chain; its full sequence is 3-deoxy-manno-octulosonate cytidylyltransferase (246 aa).

This sequence belongs to the KdsB family. As to quaternary structure, homodimer.

Its subcellular location is the cytoplasm. The catalysed reaction is 3-deoxy-alpha-D-manno-oct-2-ulosonate + CTP = CMP-3-deoxy-beta-D-manno-octulosonate + diphosphate. The protein operates within nucleotide-sugar biosynthesis; CMP-3-deoxy-D-manno-octulosonate biosynthesis; CMP-3-deoxy-D-manno-octulosonate from 3-deoxy-D-manno-octulosonate and CTP: step 1/1. It participates in bacterial outer membrane biogenesis; lipopolysaccharide biosynthesis. Activates KDO (a required 8-carbon sugar) for incorporation into bacterial lipopolysaccharide in Gram-negative bacteria. The polypeptide is 3-deoxy-manno-octulosonate cytidylyltransferase (kpsU) (Escherichia coli).